The chain runs to 386 residues: bHLH transcription factor RHL1 (386 aa).

The segment at Phe-119–Ser-186 is disordered. Low complexity predominate over residues Gln-127 to Gln-137. The segment covering Gly-138–Thr-151 has biased composition (polar residues). A basic motif; degenerate region spans residues Gln-180 to Arg-193. Residues Gln-180 to Leu-229 form the bHLH domain. Residues Glu-194–Leu-229 are helix-loop-helix motif.

In terms of tissue distribution, expressed in root epidermal cells.

Its subcellular location is the nucleus. Functionally, transcription factor that regulates the development of root hairs. The protein is bHLH transcription factor RHL1 of Lotus japonicus (Lotus corniculatus var. japonicus).